Reading from the N-terminus, the 121-residue chain is Ribonuclease P protein component (121 aa).

It belongs to the RnpA family. As to quaternary structure, consists of a catalytic RNA component (M1 or rnpB) and a protein subunit.

The enzyme catalyses Endonucleolytic cleavage of RNA, removing 5'-extranucleotides from tRNA precursor.. Its function is as follows. RNaseP catalyzes the removal of the 5'-leader sequence from pre-tRNA to produce the mature 5'-terminus. It can also cleave other RNA substrates such as 4.5S RNA. The protein component plays an auxiliary but essential role in vivo by binding to the 5'-leader sequence and broadening the substrate specificity of the ribozyme. This chain is Ribonuclease P protein component, found in Desulfosudis oleivorans (strain DSM 6200 / JCM 39069 / Hxd3) (Desulfococcus oleovorans).